The following is a 279-amino-acid chain: Shikimate dehydrogenase (NADP(+)) (279 aa).

Residues serine 19–serine 21 and threonine 66 contribute to the shikimate site. The active-site Proton acceptor is the lysine 70. Shikimate is bound by residues asparagine 91 and aspartate 106. NADP(+) contacts are provided by residues glycine 129–alanine 133 and phenylalanine 222. Residue tyrosine 224 participates in shikimate binding. Position 243 (glycine 243) interacts with NADP(+).

This sequence belongs to the shikimate dehydrogenase family. In terms of assembly, homodimer.

It catalyses the reaction shikimate + NADP(+) = 3-dehydroshikimate + NADPH + H(+). It participates in metabolic intermediate biosynthesis; chorismate biosynthesis; chorismate from D-erythrose 4-phosphate and phosphoenolpyruvate: step 4/7. Its function is as follows. Involved in the biosynthesis of the chorismate, which leads to the biosynthesis of aromatic amino acids. Catalyzes the reversible NADPH linked reduction of 3-dehydroshikimate (DHSA) to yield shikimate (SA). In Anaeromyxobacter sp. (strain Fw109-5), this protein is Shikimate dehydrogenase (NADP(+)).